The primary structure comprises 642 residues: 3D-(3,5/4)-trihydroxycyclohexane-1,2-dione hydrolase (642 aa).

Glutamate 71 lines the thiamine diphosphate pocket. The segment at 446-526 (SLPGDVQRIW…INILVFDNSG (81 aa)) is thiamine pyrophosphate binding. Mg(2+) is bound by residues aspartate 497 and asparagine 524.

It belongs to the TPP enzyme family. Mg(2+) serves as cofactor. Requires thiamine diphosphate as cofactor.

The enzyme catalyses 3D-3,5/4-trihydroxycyclohexane-1,2-dione + H2O = 5-deoxy-D-glucuronate + H(+). It functions in the pathway polyol metabolism; myo-inositol degradation into acetyl-CoA; acetyl-CoA from myo-inositol: step 3/7. Its function is as follows. Involved in the cleavage of the C1-C2 bond of 3D-(3,5/4)-trihydroxycyclohexane-1,2-dione (THcHDO) to yield 5-deoxy-glucuronate (5DG). In Lacticaseibacillus casei (Lactobacillus casei), this protein is 3D-(3,5/4)-trihydroxycyclohexane-1,2-dione hydrolase.